An 801-amino-acid polypeptide reads, in one-letter code: Probable phosphoketolase (801 aa).

It belongs to the XFP family. Thiamine diphosphate is required as a cofactor.

The chain is Probable phosphoketolase from Bradyrhizobium diazoefficiens (strain JCM 10833 / BCRC 13528 / IAM 13628 / NBRC 14792 / USDA 110).